A 346-amino-acid chain; its full sequence is Histidinol-phosphate aminotransferase (346 aa).

The residue at position 209 (Lys209) is an N6-(pyridoxal phosphate)lysine.

Belongs to the class-II pyridoxal-phosphate-dependent aminotransferase family. Histidinol-phosphate aminotransferase subfamily. As to quaternary structure, homodimer. Pyridoxal 5'-phosphate serves as cofactor.

The enzyme catalyses L-histidinol phosphate + 2-oxoglutarate = 3-(imidazol-4-yl)-2-oxopropyl phosphate + L-glutamate. It participates in amino-acid biosynthesis; L-histidine biosynthesis; L-histidine from 5-phospho-alpha-D-ribose 1-diphosphate: step 7/9. The polypeptide is Histidinol-phosphate aminotransferase (Vibrio cholerae serotype O1 (strain ATCC 39541 / Classical Ogawa 395 / O395)).